Consider the following 210-residue polypeptide: Thymidylate kinase (210 aa).

10–17 (GLEGAGKT) is a binding site for ATP.

This sequence belongs to the thymidylate kinase family.

The catalysed reaction is dTMP + ATP = dTDP + ADP. Its function is as follows. Phosphorylation of dTMP to form dTDP in both de novo and salvage pathways of dTTP synthesis. The protein is Thymidylate kinase of Erwinia tasmaniensis (strain DSM 17950 / CFBP 7177 / CIP 109463 / NCPPB 4357 / Et1/99).